The following is a 193-amino-acid chain: Dense granule protein 2 (193 aa).

N-linked (GlcNAc...) asparagine glycosylation occurs at asparagine 4. Residues 14–34 (FSPLTVVMLAVTLVAFMGVPL) traverse the membrane as a helical segment. Residue asparagine 74 is glycosylated (N-linked (GlcNAc...) asparagine). Positions 75–140 (SSELAGSRDK…APKPVPVRSA (66 aa)) are disordered. Acidic residues predominate over residues 88–98 (EAEEEAAEVET). The helical transmembrane segment at 153–173 (HRVIGTAVIAAVVAALLWKFS) threads the bilayer. The segment at 174-193 (RRRSGAPREGGENENGGEEK) is disordered.

This sequence belongs to the Gra6 family.

The protein localises to the membrane. This is Dense granule protein 2 (DG2) from Neospora caninum (Coccidian parasite).